The chain runs to 327 residues: Methionyl-tRNA formyltransferase (327 aa).

121 to 124 (SLLP) is a (6S)-5,6,7,8-tetrahydrofolate binding site.

Belongs to the Fmt family.

The catalysed reaction is L-methionyl-tRNA(fMet) + (6R)-10-formyltetrahydrofolate = N-formyl-L-methionyl-tRNA(fMet) + (6S)-5,6,7,8-tetrahydrofolate + H(+). Attaches a formyl group to the free amino group of methionyl-tRNA(fMet). The formyl group appears to play a dual role in the initiator identity of N-formylmethionyl-tRNA by promoting its recognition by IF2 and preventing the misappropriation of this tRNA by the elongation apparatus. This is Methionyl-tRNA formyltransferase from Burkholderia multivorans (strain ATCC 17616 / 249).